The following is a 441-amino-acid chain: 4-alpha-glucanotransferase (441 aa).

Ca(2+)-binding residues include D13, N15, D17, V19, and D21. D186 functions as the Nucleophile in the catalytic mechanism. E216 functions as the Proton donor in the catalytic mechanism.

The protein belongs to the glycosyl hydrolase 13 family. Monomer. Requires Ca(2+) as cofactor.

The protein localises to the cytoplasm. It catalyses the reaction Transfers a segment of a (1-&gt;4)-alpha-D-glucan to a new position in an acceptor, which may be glucose or a (1-&gt;4)-alpha-D-glucan.. The polypeptide is 4-alpha-glucanotransferase (mgtA) (Thermotoga maritima (strain ATCC 43589 / DSM 3109 / JCM 10099 / NBRC 100826 / MSB8)).